The primary structure comprises 990 residues: Transposase for transposon Tn3926 (990 aa).

The segment at 673 to 698 (GDGTTSSSDGQNFRTGSKAESTGHIN) is disordered. Positions 674 to 696 (DGTTSSSDGQNFRTGSKAESTGH) are enriched in polar residues.

Belongs to the transposase 7 family.

Required for transposition of transposon Tn3926. In Escherichia coli, this protein is Transposase for transposon Tn3926 (tnpA).